The chain runs to 247 residues: Vacuolar iron transporter 1 (247 aa).

Over 1 to 33 (MVIAGVSPPTPSSENLLQEHEEKHFTATDVVRD) the chain is Cytoplasmic. The chain crosses the membrane as a helical span at residues 34-54 (VIIGVSDGLTVPFALAAGLSG). Over 55–60 (ANVPSS) the chain is Vacuolar. A helical transmembrane segment spans residues 61 to 81 (LILTAGIAEVAAGAISMGLGG). Residues 82-167 (YLAAKSEEDH…PRRALESAMT (86 aa)) are Cytoplasmic-facing. Residues E99, E102, E110, E113, M146, and E150 each contribute to the Fe cation site. A helical membrane pass occupies residues 168-188 (IALAYVVGGLVPLSPYFFIPF). Topologically, residues 189–191 (AKQ) are vacuolar. The helical transmembrane segment at 192–212 (AMITSIAVTLLALVVFGYIKG) threads the bilayer. At 213–219 (RFTGSNP) the chain is on the cytoplasmic side. Residues 220–240 (VLSSIQTAIIGALASAAAYAM) form a helical membrane-spanning segment. Topologically, residues 241–247 (AKAVQSV) are vacuolar.

Belongs to the CCC1 family. As to expression, expressed at high levels in the blue epidermal cells of the inner bottom part of the petal (at protein level). No detectable expression in parenchyma and epidermis of the purple segments of the petal, parenchyma of the blue segments, leaf, stem, bulb and root (at protein level). High levels of mRNA in the blue epidermal cells of the inner bottom part of the petal. Low-levels of mRNA in the purple segments of the petal, stem, leaf, root, bulb and pistil.

The protein resides in the vacuole membrane. It catalyses the reaction Fe(2+)(in) = Fe(2+)(out). In terms of biological role, vacuolar iron transporter involved in the transfer of iron ions from the cytosol to the vacuole for intracellular iron storage. Plays an essential role in the development of blue coloration in tulip petals most likely due to the accumulation of ferrous ions that can form complexes with anthocyanins. This is Vacuolar iron transporter 1 from Tulipa gesneriana (Garden tulip).